The chain runs to 637 residues: 3D-(3,5/4)-trihydroxycyclohexane-1,2-dione hydrolase (637 aa).

Glutamate 66 is a binding site for thiamine diphosphate. The interval 442–522 (SLPGDLQRLW…INILLFDNAG (81 aa)) is thiamine pyrophosphate binding. 2 residues coordinate Mg(2+): aspartate 493 and asparagine 520.

This sequence belongs to the TPP enzyme family. Mg(2+) is required as a cofactor. The cofactor is thiamine diphosphate.

The enzyme catalyses 3D-3,5/4-trihydroxycyclohexane-1,2-dione + H2O = 5-deoxy-D-glucuronate + H(+). The protein operates within polyol metabolism; myo-inositol degradation into acetyl-CoA; acetyl-CoA from myo-inositol: step 3/7. Its function is as follows. Involved in the cleavage of the C1-C2 bond of 3D-(3,5/4)-trihydroxycyclohexane-1,2-dione (THcHDO) to yield 5-deoxy-glucuronate (5DG). The sequence is that of 3D-(3,5/4)-trihydroxycyclohexane-1,2-dione hydrolase from Shouchella clausii (strain KSM-K16) (Alkalihalobacillus clausii).